A 428-amino-acid polypeptide reads, in one-letter code: Putative gustatory receptor 2a (428 aa).

The Cytoplasmic portion of the chain corresponds to 1 to 40 (MDTLRALEPLHRACQVCNLWPWRLAPPPDSEGILLRRSRW). Residues 41 to 61 (LELYGWTVLIAATSFTVYGLF) form a helical membrane-spanning segment. Over 62–145 (QESSVEEKQD…INMRRQTSRR (84 aa)) the chain is Extracellular. The helical transmembrane segment at 146–166 (AVWILWGYAVSQLLILGAKLL) threads the bilayer. Residues 167-173 (SRGDRFP) lie on the Cytoplasmic side of the membrane. The chain crosses the membrane as a helical span at residues 174–194 (IYWISYLLPLLVCGLRYFQIF). Asparagine 195 carries N-linked (GlcNAc...) asparagine glycosylation. The Extracellular segment spans residues 195-250 (NATQLVRQRLDVLLVALQQLQLHQKGPAVDTVLEEQEDLEEAAMDRLIAVRLVYQR). Residues 251 to 271 (VWALVALLNRCYGLSMLMQVG) form a helical membrane-spanning segment. Over 272-300 (NDFLAITSNCYWMFLNFRQSAASPFDILQ) the chain is Cytoplasmic. The helical transmembrane segment at 301 to 321 (IVASGVWSAPHLGNVLVLSLL) threads the bilayer. Residues 322–349 (CDRTAQCASRLALCLHQVSVDLRNESHN) are Extracellular-facing. N-linked (GlcNAc...) asparagine glycosylation is present at asparagine 345. Residues 350–370 (ALVGTLVRYCAPLIILVPLQI) traverse the membrane as a helical segment. The Cytoplasmic segment spans residues 371–395 (TQFSLQLLHQRLHFSAAGFFNVDCT). Residues 396 to 416 (LLYTIVGATTTYLIILIQFHM) traverse the membrane as a helical segment. Residues 417–428 (SESTIGSDSNGQ) lie on the Extracellular side of the membrane.

It belongs to the insect chemoreceptor superfamily. Gustatory receptor (GR) family. Gr2a subfamily. Expressed in neurons of the terminal external chemosensory organ, the dorsal external chemosensory organ, as well as in the dorsal pharyngeal sense organ of larvae.

The protein resides in the cell membrane. Its function is as follows. Probable gustatory receptor which mediates acceptance or avoidance behavior, depending on its not yet determined substrates. This Drosophila melanogaster (Fruit fly) protein is Putative gustatory receptor 2a (Gr2a).